We begin with the raw amino-acid sequence, 82 residues long: Cytochrome b-c1 complex subunit 8 (82 aa).

Topologically, residues 1–43 (MGREFGNLARIRHVISYSLSPFEQRAFPSYFSKGIPNVLRRTR) are mitochondrial matrix. Residue S16 is modified to Phosphoserine. K33 carries the N6-acetyllysine; alternate modification. Position 33 is an N6-succinyllysine; alternate (K33). The helical transmembrane segment at 44 to 62 (ERILRVAPPFVVVYLIYTW) threads the bilayer. Residues 63 to 82 (GNQEFEQSKRKNPAMYENDK) are Mitochondrial intermembrane-facing.

The protein belongs to the UQCRQ/QCR8 family. As to quaternary structure, component of the ubiquinol-cytochrome c oxidoreductase (cytochrome b-c1 complex, complex III, CIII), a multisubunit enzyme composed of 11 subunits. The complex is composed of 3 respiratory subunits cytochrome b, cytochrome c1 and Rieske protein UQCRFS1, 2 core protein subunits UQCRC1/QCR1 and UQCRC2/QCR2, and 6 low-molecular weight protein subunits UQCRH/QCR6, UQCRB/QCR7, UQCRQ/QCR8, UQCR10/QCR9, UQCR11/QCR10 and subunit 9, the cleavage product of Rieske protein UQCRFS1. The complex exists as an obligatory dimer and forms supercomplexes (SCs) in the inner mitochondrial membrane with NADH-ubiquinone oxidoreductase (complex I, CI) and cytochrome c oxidase (complex IV, CIV), resulting in different assemblies (supercomplex SCI(1)III(2)IV(1) and megacomplex MCI(2)III(2)IV(2)). Interacts with UQCC6.

The protein resides in the mitochondrion inner membrane. Functionally, component of the ubiquinol-cytochrome c oxidoreductase, a multisubunit transmembrane complex that is part of the mitochondrial electron transport chain which drives oxidative phosphorylation. The respiratory chain contains 3 multisubunit complexes succinate dehydrogenase (complex II, CII), ubiquinol-cytochrome c oxidoreductase (cytochrome b-c1 complex, complex III, CIII) and cytochrome c oxidase (complex IV, CIV), that cooperate to transfer electrons derived from NADH and succinate to molecular oxygen, creating an electrochemical gradient over the inner membrane that drives transmembrane transport and the ATP synthase. The cytochrome b-c1 complex catalyzes electron transfer from ubiquinol to cytochrome c, linking this redox reaction to translocation of protons across the mitochondrial inner membrane, with protons being carried across the membrane as hydrogens on the quinol. In the process called Q cycle, 2 protons are consumed from the matrix, 4 protons are released into the intermembrane space and 2 electrons are passed to cytochrome c. The polypeptide is Cytochrome b-c1 complex subunit 8 (Uqcrq) (Mus musculus (Mouse)).